Here is a 96-residue protein sequence, read N- to C-terminus: Co-chaperonin GroES (96 aa).

The protein belongs to the GroES chaperonin family. Heptamer of 7 subunits arranged in a ring. Interacts with the chaperonin GroEL.

Its subcellular location is the cytoplasm. In terms of biological role, together with the chaperonin GroEL, plays an essential role in assisting protein folding. The GroEL-GroES system forms a nano-cage that allows encapsulation of the non-native substrate proteins and provides a physical environment optimized to promote and accelerate protein folding. GroES binds to the apical surface of the GroEL ring, thereby capping the opening of the GroEL channel. In Wolbachia sp. subsp. Drosophila simulans (strain wRi), this protein is Co-chaperonin GroES.